The primary structure comprises 403 residues: Phosphoglycerate kinase (403 aa).

Residues 22–24 (DLN), Arg37, 60–63 (HLGR), Arg119, and Arg156 each bind substrate. ATP is bound by residues Lys206, Gly302, Glu333, and 359 to 362 (GGDS).

It belongs to the phosphoglycerate kinase family. As to quaternary structure, monomer.

Its subcellular location is the cytoplasm. The enzyme catalyses (2R)-3-phosphoglycerate + ATP = (2R)-3-phospho-glyceroyl phosphate + ADP. Its pathway is carbohydrate degradation; glycolysis; pyruvate from D-glyceraldehyde 3-phosphate: step 2/5. The sequence is that of Phosphoglycerate kinase from Leifsonia xyli subsp. xyli (strain CTCB07).